The following is a 194-amino-acid chain: Peptidyl-tRNA hydrolase (194 aa).

Tyr-16 contributes to the tRNA binding site. The active-site Proton acceptor is the His-21. TRNA-binding residues include Phe-67, Asn-69, and Asn-115.

The protein belongs to the PTH family. In terms of assembly, monomer.

It localises to the cytoplasm. The enzyme catalyses an N-acyl-L-alpha-aminoacyl-tRNA + H2O = an N-acyl-L-amino acid + a tRNA + H(+). Functionally, hydrolyzes ribosome-free peptidyl-tRNAs (with 1 or more amino acids incorporated), which drop off the ribosome during protein synthesis, or as a result of ribosome stalling. In terms of biological role, catalyzes the release of premature peptidyl moieties from peptidyl-tRNA molecules trapped in stalled 50S ribosomal subunits, and thus maintains levels of free tRNAs and 50S ribosomes. This Klebsiella pneumoniae (strain 342) protein is Peptidyl-tRNA hydrolase.